Consider the following 62-residue polypeptide: Ferredoxin-1 (62 aa).

4Fe-4S ferredoxin-type domains lie at 2–28 and 29–62; these read ALYI…SAGS and EIYV…IVQG. [4Fe-4S] cluster-binding residues include C9, C12, C15, C19, C38, C41, C50, and C54.

[4Fe-4S] cluster is required as a cofactor.

In terms of biological role, ferredoxins are iron-sulfur proteins that transfer electrons in a wide variety of metabolic reactions. This chain is Ferredoxin-1, found in Chlorobaculum tepidum (strain ATCC 49652 / DSM 12025 / NBRC 103806 / TLS) (Chlorobium tepidum).